Here is a 1087-residue protein sequence, read N- to C-terminus: A-kinase anchor protein 9 (1087 aa).

Residues 5–461 (EVQCQAEKVR…REREKMERIQ (457 aa)) are a coiled coil. The tract at residues 559–572 (SLQKVLEEKVAAAL) is PKA-RII subunit binding domain. Residues 614–773 (MESDVSALTW…SEKEDKTEVQ (160 aa)) are a coiled coil. The segment covering 667 to 685 (VQDSETKQRERERQSRLHG) has biased composition (basic and acidic residues). Residues 667-691 (VQDSETKQRERERQSRLHGDLGVLE) form a disordered region.

In terms of assembly, interacts with the regulatory region of protein kinase N (PKN), protein phosphatase 2A (PP2A), protein phosphatase 1 (PP1) and the immature non-phosphorylated form of PKC epsilon. Interacts with CIP4 and FNBP1. Interacts with chloride intracellular channel proteins CLIC1, CLIC4 and CLIC5. CSNK1D binding promotes its centrosomal subcellular location. Interacts with GM130/GOLGA2; leading to recruitment to the Golgi apparatus. Interacts with KCNQ1; targets protein kinase A (PKA) catalytic and regulatory subunits and protein phosphatase 1 (PP1), to the heterodimer KCNQ1-KCNE1. Interacts with PDE4DIP; this interaction stabilizes both proteins. In complex with PDE4DIP, recruits CAMSAP2 to the Golgi apparatus. Forms a pericentrosomal complex with CDK5RAP2, EB1/MAPRE1 and PDE4DIP; within this complex, MAPRE1 binding to CDK5RAP2 may be mediated by PDE4DIP. The interaction with PDE4DIP is isoform-specific. Interacts with MAPRE1 and MAPRE3. Interacts (via C-terminus) with CAMSAP2; this interaction is much stronger in the presence of PDE4DIP. Interacts with CAMSAP3. Interacts (via C-terminus) with the gamma-tubulin ring complex (gamma-TuRC), composed of gamma-tubulin, TUBGCP2, TUBGCP3, TUBGCP4, TUBGCP5 and TUBGCP6. In terms of tissue distribution, highly expressed in gastric parietal cells.

It is found in the golgi apparatus. The protein resides in the cytoplasm. The protein localises to the cytoskeleton. It localises to the microtubule organizing center. Its subcellular location is the centrosome. Scaffolding protein that assembles several protein kinases and phosphatases on the centrosome and Golgi apparatus. Required to maintain the integrity of the Golgi apparatus. Required for microtubule nucleation at the cis-side of the Golgi apparatus. Required for association of the centrosomes with the poles of the bipolar mitotic spindle during metaphase. In complex with PDE4DIP, recruits CAMSAP2 to the Golgi apparatus and tethers non-centrosomal minus-end microtubules to the Golgi, an important step for polarized cell movement. In complex with PDE4DIP, EB1/MAPRE1 and CDK5RAP2, contributes to microtubules nucleation and extension also from the centrosome to the cell periphery. The interaction with PDE4DIP is isoform-specific. The sequence is that of A-kinase anchor protein 9 (AKAP9) from Oryctolagus cuniculus (Rabbit).